The primary structure comprises 209 residues: Response regulator protein VraR (209 aa).

The region spanning 4 to 120 (KVLFVDDHEM…DIADAVRKTS (117 aa)) is the Response regulatory domain. Residue D55 is modified to 4-aspartylphosphate. One can recognise an HTH luxR-type domain in the interval 141–206 (RAELYEMLTE…QAVIYAFQHN (66 aa)). Residues 165 to 184 (NQEIASASHITIKTVKTHVS) constitute a DNA-binding region (H-T-H motif).

As to quaternary structure, homodimer. In terms of processing, phosphorylated by VraS. Phosphorylation state of VraR controls dimerization of the protein.

Member of the two-component regulatory system VraS/VraR involved in the control of the cell wall peptidoglycan biosynthesis. Upon cellular stress, the histidine kinase VraS transfers the phosphoryl group onto VraR. Upon phosphorylation, VraR dimerizes at the N-terminal domain. In turn, phosphorylation-induced dimerization expand and enhance the VraR binding to its own promoter leading to increased expression and subsequent modulation of as many as 40 genes, which ultimately constitute the S.aureus response to cell wall damage. In addition, inhibits the host autophagic flux and delays the early stage of autophagosome formation, thereby promoting bacterial survival. Facilitates the ability of S.aureus to resist host polymorphonuclear leukocytes-mediated phagocytosis and killing thus contributing to immune evasion. The sequence is that of Response regulator protein VraR (vraR) from Staphylococcus aureus (strain NCTC 8325 / PS 47).